Consider the following 791-residue polypeptide: Cullin-2 (791 aa).

One can recognise a Cullin neddylation domain in the interval Asp-722 to Asn-784. Residue Lys-736 forms a Glycyl lysine isopeptide (Lys-Gly) (interchain with G-Cter in NEDD8) linkage.

Belongs to the cullin family. Component of multiple CBC (Cul2-ElonginB-ElonginC) E3 ubiquitin-protein ligase complexes formed of cul-2, elb-1, elc-1, rbx-1 and a variable substrate recognition component. Component of the CBC(fem-1) E3 ubiquitin-protein ligase complex with fem-1, fem-2 and fem-3. The CBC(fem-1) complex interacts with tra-1 and promotes tra-1 degradation. Probable component of the CBC(lrr-1) E3 ubiquitin-protein ligase complex incuding cul-2, elb-1, elc-1, rbx-1 and lrr-1. The CBC(lrr-1) complex interacts with the DNA replisome complex at the end of S phase; the interaction promotes the release of components of the CMG helicase complex (a component of the replisome) from chromatin. Probable component of an CBC(zif-1) E3 ubiquitin-protein ligase including cul-2, elc-1, rbx-1 and zif-1. Part of an E3 ubiquitin-protein ligase complex including cul-2, elc-1 and zyg-11. Interacts with Skp1-related protein skr-10. In terms of processing, neddylated; which enhances the ubiquitination activity of CBC (Cul2-ElonginB-ElonginC) E3 ubiquitin-protein ligase complexes. As to expression, in adults, highly expressed in meiotic cells and oocytes. In larvae, expressed in many proliferating cell types: P cells during the L1 stage; seam cells when they divide at every molt; vulval and somatic gonad cells in late L3 and L4 stages; and intestinal cells throughout larval development.

Its subcellular location is the cytoplasm. The protein localises to the nucleus. It functions in the pathway protein modification; protein ubiquitination. Core component of multiple cullin-RING-based CBC (Cul2-ElonginB-ElonginC) E3 ubiquitin-protein ligase complexes which mediate the ubiquitination and subsequent proteasomal degradation of target proteins. As a scaffold protein may contribute to catalysis through positioning of the substrate and the ubiquitin-conjugating enzyme. The functional specificity of the CBC complex depends on the variable substrate recognition component. May function in ubiquitin-mediated degradation of CKIs to target cki-1 for degradation. CBC(zif-1) may ensure germline precursor cell asymmetry by targeting germline proteins for destruction if expressed in non-germline cells. As part of the CBC(fem-1) complex directs ubiquitination of tra-1. As part of the CBC(lrr-1) complex, required for the ubiquitination and dissasembly of the CMG helicase complex from chromatin at the end of DNA replication. Positive cell-cycle regulator that is required at two distinct points in the cell cycle; the G1-to-S-phase transition and mitosis. Also required for proper cytoskeletal movement and mitotic chromosome condensation. The protein is Cullin-2 of Caenorhabditis elegans.